The chain runs to 297 residues: Beta-glucoside kinase (297 aa).

5 to 11 lines the ATP pocket; it reads AFDIGGT.

This sequence belongs to the ROK (NagC/XylR) family. Homotetramer.

The catalysed reaction is D-cellobiose + ATP = 6-phospho-beta-D-glucosyl-(1-&gt;4)-D-glucose + ADP + H(+). Is inhibited by N-ethylmaleimide in vitro, but ATP affords considerable protection against the inhibitor. Catalyzes the ATP-dependent phosphorylation of a wide variety of beta-D-glucosides, to produce 6-phospho-beta-D-glucosides including cellobiose-6'-P, gentiobiose-6'-P, cellobiitol-6-P, salicin-6-P, and arbutin-6-P. Is not able to phosphorylate alpha-D-glucosides. May have a dual role of kinase and transcriptional regulator of the cellobiose-PTS operon. This Klebsiella pneumoniae protein is Beta-glucoside kinase (bglK).